The following is a 256-amino-acid chain: MIKRVNKLVLGISLLFLVISIAAGCGIGKEAEIKKSFEKTLSMYPIKNLEDLYDKEGYRDDEFDKNDKGTWTISSEMAIQKKGEALNIKGMVLKLNRNTRSAKGFYYVNAIKKDEDGRPQDNQIEYPVKMVDNKIIPTKEIKDDNIKKEIENFKFLVQYGNFKDLSKYKDGDISYNPEVPSYSAKYQLTNDDYNVKQLRKRYNIPTNKAPKLLLKGTGNLKGSSVGYKDIEFTFVEKKGENIYFSDSLHLKPSEDK.

An N-terminal signal peptide occupies residues 1–24; sequence MIKRVNKLVLGISLLFLVISIAAG. The N-palmitoyl cysteine moiety is linked to residue C25. A lipid anchor (S-diacylglycerol cysteine) is attached at C25.

Belongs to the staphylococcal tandem lipoprotein family.

The protein resides in the cell membrane. This is an uncharacterized protein from Staphylococcus aureus.